An 827-amino-acid chain; its full sequence is MQEHYDFKEIEKKWQEDWNKENTYQVPDFSERPKYYCLEMFPYPSGKLHMGHVRNYSIGDVVARFKTMQGYDVLHPMGWDAFGLPAENAAIKHGIAPATWTWDNIAHMRSQLKQLGLSYDWNREVATCHTEYYKWGQWLFLQLYKKGLCYKKHARVNWCPDCATVLANEQVVDGACERCSAVVEQKELDQWFFRITEYAQRLLNDLKLLKGWPDKVKIMQENWIGRSEGAELTFQVEGSDESITVFTTRPDTVYGVSYMVLAPEHPLVAKLIAGRPQEAEVIGFVNRVNKLTELDRTSSDKEGVFTGAYCINPFDGARVPILIANYVLYHYGTGAVMGVPAHDERDFEFAHKYNLPIKVVIYPAQDKEIRVEDMKEAYTADGIMVHSGPFDGSPNRQGIKKVIKYAEEKGIGKGIVNYRLRDWLISRQRYWGTPIPIVYCEKCGTVPVPEDQLPVILPTDVAFKPTGESPLKGRPDFVHTTCPQCGGPAQRETDTMDTFVDSSWYYLRYTSSRDTEYAWDKNKADRWMNVDQYIGGVEHAILHLLYSRFFTKVFYDLGLVNVQEPFENLLTQGMVLKDGSKMSKSKGNVVSPEEIIDRYGADTARMFILFAAPPERDLEWSDRGVEGSHRFLNRVWRLVYSLKDEVAGAPAISSVNAYVGVHKEMRRLTHYAIKKVTEDVSGRFNFNTAISTIMELVNGIYTYRDKVAAVERDTAVLAEAVNSTIILLAPFAPHIAEELWSATGHQGSVHKQPWLTFDSAALVEDEVEVAVQINGKVRERLNIPANMKPAEMQQYLMDMESVKILIGDKQIVKIIPVPGKLLNIVVK.

Positions 42–52 match the 'HIGH' region motif; the sequence is PYPSGKLHMGH. A 'KMSKS' region motif is present at residues 581-585; sequence KMSKS. Lys-584 is an ATP binding site.

This sequence belongs to the class-I aminoacyl-tRNA synthetase family.

It is found in the cytoplasm. The catalysed reaction is tRNA(Leu) + L-leucine + ATP = L-leucyl-tRNA(Leu) + AMP + diphosphate. The polypeptide is Leucine--tRNA ligase (Desulforamulus reducens (strain ATCC BAA-1160 / DSM 100696 / MI-1) (Desulfotomaculum reducens)).